Here is a 93-residue protein sequence, read N- to C-terminus: Large ribosomal subunit protein uL23 (93 aa).

This sequence belongs to the universal ribosomal protein uL23 family. As to quaternary structure, part of the 50S ribosomal subunit. Contacts protein L29, and trigger factor when it is bound to the ribosome.

One of the early assembly proteins it binds 23S rRNA. One of the proteins that surrounds the polypeptide exit tunnel on the outside of the ribosome. Forms the main docking site for trigger factor binding to the ribosome. In Helicobacter pylori (strain P12), this protein is Large ribosomal subunit protein uL23.